The following is a 221-amino-acid chain: MAVFIGATGTDIGKTLFSSLILGKYGKSLGLKYFKPVQTGNDSDRVTLMNLTGLHESYFLKNYYSLSFAGSPHYASELEGVEIDSDELSRHLYSIRDEKIIVEGAGGLLVPLTRKILTLELVRQSEIPLILVAPVSLGAINQTLLAIEAVQNRKIDLKGIYFIGIPDKTTEDNIRTITEWSGVTLLGNFFLNSKEKMSRERFQIECLSRFDQCEVIKKMFV.

11–16 (DIGKTL) is a binding site for ATP. A Mg(2+)-binding site is contributed by Thr-15. Lys-35 is an active-site residue. Position 39 (Thr-39) interacts with substrate. Residues Asp-44 and 103 to 106 (EGAG) contribute to the ATP site. Residues Asp-44 and Glu-103 each coordinate Mg(2+).

Belongs to the dethiobiotin synthetase family. Homodimer. The cofactor is Mg(2+).

It localises to the cytoplasm. The enzyme catalyses (7R,8S)-7,8-diammoniononanoate + CO2 + ATP = (4R,5S)-dethiobiotin + ADP + phosphate + 3 H(+). It participates in cofactor biosynthesis; biotin biosynthesis; biotin from 7,8-diaminononanoate: step 1/2. Its function is as follows. Catalyzes a mechanistically unusual reaction, the ATP-dependent insertion of CO2 between the N7 and N8 nitrogen atoms of 7,8-diaminopelargonic acid (DAPA, also called 7,8-diammoniononanoate) to form a ureido ring. The chain is ATP-dependent dethiobiotin synthetase BioD from Leptospira borgpetersenii serovar Hardjo-bovis (strain L550).